The primary structure comprises 359 residues: Phosphoserine aminotransferase (359 aa).

Residue Arg42 coordinates L-glutamate. Residues 76 to 77 (AS), Trp102, Thr152, Asp171, and Gln194 contribute to the pyridoxal 5'-phosphate site. The residue at position 195 (Lys195) is an N6-(pyridoxal phosphate)lysine. Position 236 to 237 (236 to 237 (NT)) interacts with pyridoxal 5'-phosphate.

This sequence belongs to the class-V pyridoxal-phosphate-dependent aminotransferase family. SerC subfamily. As to quaternary structure, homodimer. It depends on pyridoxal 5'-phosphate as a cofactor.

The protein localises to the cytoplasm. The catalysed reaction is O-phospho-L-serine + 2-oxoglutarate = 3-phosphooxypyruvate + L-glutamate. The enzyme catalyses 4-(phosphooxy)-L-threonine + 2-oxoglutarate = (R)-3-hydroxy-2-oxo-4-phosphooxybutanoate + L-glutamate. It participates in amino-acid biosynthesis; L-serine biosynthesis; L-serine from 3-phospho-D-glycerate: step 2/3. The protein operates within cofactor biosynthesis; pyridoxine 5'-phosphate biosynthesis; pyridoxine 5'-phosphate from D-erythrose 4-phosphate: step 3/5. In terms of biological role, catalyzes the reversible conversion of 3-phosphohydroxypyruvate to phosphoserine and of 3-hydroxy-2-oxo-4-phosphonooxybutanoate to phosphohydroxythreonine. This Vesicomyosocius okutanii subsp. Calyptogena okutanii (strain HA) protein is Phosphoserine aminotransferase.